Here is a 1067-residue protein sequence, read N- to C-terminus: Lon protease homolog, mitochondrial (1067 aa).

A mitochondrion-targeting transit peptide spans 1-36; sequence MITRLSGACLRRSGAKRNWPREHLVHRSLLASFSTT. Residues 55–82 show a composition bias toward basic and acidic residues; the sequence is KSKEPKDNKPLDNKNDPKKTHNEDESHT. Disordered regions lie at residues 55–142 and 262–314; these read KSKE…MPLN and IPPK…ESTP. A compositionally biased stretch (acidic residues) spans 128–139; the sequence is FELGGEENEDEM. The region spanning 162–425 is the Lon N-terminal domain; sequence LLALPIARRP…KALYVLKKEL (264 aa). The span at 293–311 shows a compositional bias: basic and acidic residues; that stretch reads VKSDLKQDNGKEEPEKEVE. ATP is bound at residue 578-585; sequence GPPGVGKT. The tract at residues 791–820 is disordered; that stretch reads NSKEKSTGKSGKKTSPQSSEDAANKEASSV. In terms of domain architecture, Lon proteolytic spans 854–1040; sequence TTPPGVVMGL…DDVFKRVFSN (187 aa). Residues serine 946 and lysine 989 contribute to the active site.

It belongs to the peptidase S16 family. Homohexamer or homoheptamer. Organized in a ring with a central cavity.

It localises to the mitochondrion matrix. It catalyses the reaction Hydrolysis of proteins in presence of ATP.. In terms of biological role, ATP-dependent serine protease that mediates the selective degradation of misfolded, unassembled or oxidatively damaged polypeptides as well as certain short-lived regulatory proteins in the mitochondrial matrix. May also have a chaperone function in the assembly of inner membrane protein complexes. Participates in the regulation of mitochondrial gene expression and in the maintenance of the integrity of the mitochondrial genome. Binds to mitochondrial DNA in a site-specific manner. The protein is Lon protease homolog, mitochondrial (pim1) of Schizosaccharomyces pombe (strain 972 / ATCC 24843) (Fission yeast).